The primary structure comprises 568 residues: Potassium-transporting ATPase potassium-binding subunit (568 aa).

Transmembrane regions (helical) follow at residues 3 to 23 (TEIL…YPLG), 64 to 84 (FLKA…VLLV), 133 to 153 (FVIM…MAGV), 179 to 199 (ILLP…TPMG), 255 to 275 (MVEC…LGFY), 281 to 301 (LGYS…FINV), 375 to 395 (FGGV…AVFI), 418 to 438 (IATF…AISS), 497 to 517 (IVLI…AGLL), and 535 to 555 (VTFA…SFFP).

The protein belongs to the KdpA family. The system is composed of three essential subunits: KdpA, KdpB and KdpC.

It localises to the cell inner membrane. Part of the high-affinity ATP-driven potassium transport (or Kdp) system, which catalyzes the hydrolysis of ATP coupled with the electrogenic transport of potassium into the cytoplasm. This subunit binds the periplasmic potassium ions and delivers the ions to the membrane domain of KdpB through an intramembrane tunnel. In Bacteroides fragilis (strain ATCC 25285 / DSM 2151 / CCUG 4856 / JCM 11019 / LMG 10263 / NCTC 9343 / Onslow / VPI 2553 / EN-2), this protein is Potassium-transporting ATPase potassium-binding subunit.